A 380-amino-acid chain; its full sequence is Erythronate-4-phosphate dehydrogenase (380 aa).

Residues Ser45 and Thr66 each contribute to the substrate site. NAD(+) is bound by residues 126–127 (QV), Asp146, Thr174, 205–207 (ASR), and Asp231. Arg207 is an active-site residue. Glu236 is an active-site residue. Residue His253 is the Proton donor of the active site. Position 256 (Gly256) interacts with NAD(+). Tyr257 contributes to the substrate binding site.

It belongs to the D-isomer specific 2-hydroxyacid dehydrogenase family. PdxB subfamily. Homodimer.

The protein resides in the cytoplasm. It catalyses the reaction 4-phospho-D-erythronate + NAD(+) = (R)-3-hydroxy-2-oxo-4-phosphooxybutanoate + NADH + H(+). It participates in cofactor biosynthesis; pyridoxine 5'-phosphate biosynthesis; pyridoxine 5'-phosphate from D-erythrose 4-phosphate: step 2/5. Functionally, catalyzes the oxidation of erythronate-4-phosphate to 3-hydroxy-2-oxo-4-phosphonooxybutanoate. The sequence is that of Erythronate-4-phosphate dehydrogenase from Pseudomonas syringae pv. tomato (strain ATCC BAA-871 / DC3000).